The following is a 361-amino-acid chain: Putative pumilio homolog 22 (361 aa).

Residues 5–348 form the PUM-HD domain; sequence RGYDLASQVL…NIVAIIDSET (344 aa). Pumilio repeat units follow at residues 27–63 and 64–103; these read HITY…EFLD and LIAQ…RLHE. Residues 104-131 form a Pumilio 3; degenerate repeat; the sequence is LMAEFDEVLSTSVTADVDKLHKLASKLM. A Pumilio 4 repeat occupies 132–167; the sequence is LDSDLFFEFVITRRGSLMIQIILGKSEEVDQVILAG. The stretch at 168–205 is one Pumilio 5; degenerate repeat; it reads VKQRFIDVTTNFYGYRIMIQTIKVFKKRGDLKVYDQIL. Residues 206–243 form a Pumilio 6; degenerate repeat; it reads RLIGVHALYLTKDPDMGNKTFQHAINLHHQDCTTFIAC. 2 Pumilio repeats span residues 244-284 and 285-319; these read GLQS…EIVK and CDED…DFFG.

Its subcellular location is the cytoplasm. Its function is as follows. Sequence-specific RNA-binding protein that regulates translation and mRNA stability by binding the 3'-UTR of target mRNAs. The polypeptide is Putative pumilio homolog 22 (APUM22) (Arabidopsis thaliana (Mouse-ear cress)).